A 166-amino-acid polypeptide reads, in one-letter code: Transcription factor HES-5 (166 aa).

One can recognise a bHLH domain in the interval 16-72; that stretch reads KNRLRKPVVEKMRRDRINSSIEQLKLLLEQEFARHQPNSKLEKADILEMAVSYLKHS. The 32-residue stretch at 88–119 folds into the Orange domain; the sequence is YSEGYSWCLQEAVQFLTLHAASDTQMKLLYHF. A disordered region spans residues 125 to 166; it reads PAAPVKETPTPGAAPQPARSSTKAAASVSTSRQSACGLWRPW. The segment covering 142 to 156 has biased composition (low complexity); that stretch reads ARSSTKAAASVSTSR. The WRPW motif signature appears at 163 to 166; that stretch reads WRPW.

In terms of assembly, transcription repression requires formation of a complex with a corepressor protein of the Groucho/TLE family. As to expression, expressed predominantly in embryonic neural lineage cells.

It is found in the nucleus. In terms of biological role, transcriptional repressor of genes that require a bHLH protein for their transcription. Plays an important role as neurogenesis negative regulator. This is Transcription factor HES-5 (Hes5) from Rattus norvegicus (Rat).